Here is a 171-residue protein sequence, read N- to C-terminus: UPF0725 protein At3g25080 (171 aa).

The protein belongs to the UPF0725 (EMB2204) family.

In Arabidopsis thaliana (Mouse-ear cress), this protein is UPF0725 protein At3g25080.